Here is a 216-residue protein sequence, read N- to C-terminus: MWPPCGTLRTLALARSRGARACSGDGGVSYTQGQSPEPRTREYFYYVDHQGQLFLDDSKMKNFITCFKDPQFLVTFFSRLRPNRSGRYEAAFPFLSPCGRERNFLRCEDRPVVFTHLLTADHGPPRLSYCGGGEALAVPFEPARLLPLAANGRLYHPAPERAGGVGLVRSALAFELSACFEYGPGAPALPSHVRWQGRRLALTMDLAPLLLAARSP.

Belongs to the UPF0598 family.

The polypeptide is UPF0598 protein C8orf82 (C8orf82) (Homo sapiens (Human)).